The chain runs to 590 residues: Ankyrin repeat-containing protein ITN1 (590 aa).

Residues 25 to 44 (ENQNPMIDPSPTPSPSATAT) form a disordered region. ANK repeat units lie at residues 73–102 (HNDT…SQME), 128–157 (LGET…RESI), 163–192 (SGYD…TLSQ), 197–226 (SNAT…NLLE), 231–260 (NNKN…QLAR), 265–294 (KGQT…AIVM), and 299–329 (SCNT…NANT). 4 helical membrane passes run 422–442 (VTVV…TVPG), 460–480 (IFFI…VVQI), 500–520 (LMWL…YIVV), and 531–551 (VTVV…YYVV).

As to quaternary structure, interacts with REM19/RTV1. In terms of tissue distribution, expressed in roots, shoots, leaf vasculature and stems.

The protein resides in the cell membrane. Involved in salt stress tolerance. May act through abscisic acid (ABA) signaling pathways and promote reactive oxygen species (ROS) production. The polypeptide is Ankyrin repeat-containing protein ITN1 (Arabidopsis thaliana (Mouse-ear cress)).